We begin with the raw amino-acid sequence, 402 residues long: Phosphoglycerate kinase (402 aa).

Substrate is bound by residues 24 to 26 (DFN), arginine 40, 63 to 66 (HFGR), arginine 122, and arginine 155. Residues lysine 206, glycine 297, glutamate 328, and 357–360 (GGDS) each bind ATP.

Belongs to the phosphoglycerate kinase family. Monomer.

It localises to the cytoplasm. It carries out the reaction (2R)-3-phosphoglycerate + ATP = (2R)-3-phospho-glyceroyl phosphate + ADP. It functions in the pathway carbohydrate degradation; glycolysis; pyruvate from D-glyceraldehyde 3-phosphate: step 2/5. This is Phosphoglycerate kinase from Synechococcus elongatus (strain ATCC 33912 / PCC 7942 / FACHB-805) (Anacystis nidulans R2).